The primary structure comprises 159 residues: Protein-export protein SecB (159 aa).

Belongs to the SecB family. As to quaternary structure, homotetramer, a dimer of dimers. One homotetramer interacts with 1 SecA dimer.

Its subcellular location is the cytoplasm. Its function is as follows. One of the proteins required for the normal export of preproteins out of the cell cytoplasm. It is a molecular chaperone that binds to a subset of precursor proteins, maintaining them in a translocation-competent state. It also specifically binds to its receptor SecA. In Pseudomonas fluorescens (strain SBW25), this protein is Protein-export protein SecB.